Reading from the N-terminus, the 239-residue chain is Cysteine-rich venom protein (239 aa).

Residues 1–18 form the signal peptide; it reads MIVFILLSLAAVLQQSVA. One can recognise an SCP domain in the interval 37–165; that stretch reads VDMHNSFRRS…PYNYFYVCQY (129 aa). Cystine bridges form between Cys74–Cys152, Cys91–Cys166, Cys147–Cys163, Cys185–Cys192, Cys188–Cys197, Cys210–Cys228, and Cys219–Cys232. Residues 201-234 enclose the ShKT domain; it reads CPINNVFTNCDSLLQQSSCEDSYITTNCGASCFC.

The protein belongs to the CRISP family. As to expression, expressed by the venom gland.

The protein resides in the secreted. Its function is as follows. Blocks contraction of smooth muscle elicited by high potassium-induced depolarization, but does not block caffeine-stimulated contraction. May target voltage-gated calcium channels on smooth muscle. This chain is Cysteine-rich venom protein, found in Cerberus rynchops (Dog-faced water snake).